The chain runs to 404 residues: Cysteine desulfurase IscS (404 aa).

Pyridoxal 5'-phosphate-binding positions include 75–76, Asn155, Gln183, and 203–205; these read AT and SAH. Lys206 carries the post-translational modification N6-(pyridoxal phosphate)lysine. Residue Thr243 coordinates pyridoxal 5'-phosphate. The Cysteine persulfide intermediate role is filled by Cys328. Cys328 contacts [2Fe-2S] cluster.

It belongs to the class-V pyridoxal-phosphate-dependent aminotransferase family. NifS/IscS subfamily. Homodimer. Forms a heterotetramer with IscU, interacts with other sulfur acceptors. Requires pyridoxal 5'-phosphate as cofactor.

The protein resides in the cytoplasm. It catalyses the reaction (sulfur carrier)-H + L-cysteine = (sulfur carrier)-SH + L-alanine. Its pathway is cofactor biosynthesis; iron-sulfur cluster biosynthesis. In terms of biological role, master enzyme that delivers sulfur to a number of partners involved in Fe-S cluster assembly, tRNA modification or cofactor biosynthesis. Catalyzes the removal of elemental sulfur atoms from cysteine to produce alanine. Functions as a sulfur delivery protein for Fe-S cluster synthesis onto IscU, an Fe-S scaffold assembly protein, as well as other S acceptor proteins. The chain is Cysteine desulfurase IscS from Shewanella loihica (strain ATCC BAA-1088 / PV-4).